The primary structure comprises 154 residues: SsrA-binding protein (154 aa).

Residues 132 to 154 (KRESIKKRQDKRDMERALKRGAE) are disordered.

Belongs to the SmpB family.

Its subcellular location is the cytoplasm. In terms of biological role, required for rescue of stalled ribosomes mediated by trans-translation. Binds to transfer-messenger RNA (tmRNA), required for stable association of tmRNA with ribosomes. tmRNA and SmpB together mimic tRNA shape, replacing the anticodon stem-loop with SmpB. tmRNA is encoded by the ssrA gene; the 2 termini fold to resemble tRNA(Ala) and it encodes a 'tag peptide', a short internal open reading frame. During trans-translation Ala-aminoacylated tmRNA acts like a tRNA, entering the A-site of stalled ribosomes, displacing the stalled mRNA. The ribosome then switches to translate the ORF on the tmRNA; the nascent peptide is terminated with the 'tag peptide' encoded by the tmRNA and targeted for degradation. The ribosome is freed to recommence translation, which seems to be the essential function of trans-translation. This Acaryochloris marina (strain MBIC 11017) protein is SsrA-binding protein.